The following is a 120-amino-acid chain: Cytochrome b5 (120 aa).

The Cytochrome b5 heme-binding domain occupies 2–78 (PKVYSYQEVA…LKGLYIGDVD (77 aa)). The heme site is built by His37 and His61. A helical membrane pass occupies residues 98–118 (GSGTLVVILAILMLGVAYYLL).

The protein belongs to the cytochrome b5 family.

The protein resides in the endoplasmic reticulum membrane. Its subcellular location is the microsome membrane. Membrane bound hemoprotein which function as an electron carrier for several membrane bound oxygenases. It plays a role in fatty-acid desaturation and is also involved in several steps of the sterol biosynthesis pathway, particularly in the 4-demethylation of the 4,4'-dimethyl zymosterol. The sequence is that of Cytochrome b5 (CYB5) from Saccharomyces cerevisiae (strain ATCC 204508 / S288c) (Baker's yeast).